The chain runs to 382 residues: S-adenosylmethionine synthase (382 aa).

Histidine 16 lines the ATP pocket. Residue aspartate 18 participates in Mg(2+) binding. A K(+)-binding site is contributed by glutamate 44. Residues glutamate 57 and glutamine 100 each contribute to the L-methionine site. The flexible loop stretch occupies residues 100-110 (QSPDIAQGVDN). ATP is bound by residues 165-167 (DAK), 231-232 (RF), aspartate 240, 246-247 (RK), and lysine 267. An L-methionine-binding site is contributed by aspartate 240. Lysine 271 contacts L-methionine.

The protein belongs to the AdoMet synthase family. As to quaternary structure, homotetramer; dimer of dimers. Mg(2+) serves as cofactor. The cofactor is K(+).

It localises to the cytoplasm. It catalyses the reaction L-methionine + ATP + H2O = S-adenosyl-L-methionine + phosphate + diphosphate. Its pathway is amino-acid biosynthesis; S-adenosyl-L-methionine biosynthesis; S-adenosyl-L-methionine from L-methionine: step 1/1. In terms of biological role, catalyzes the formation of S-adenosylmethionine (AdoMet) from methionine and ATP. The overall synthetic reaction is composed of two sequential steps, AdoMet formation and the subsequent tripolyphosphate hydrolysis which occurs prior to release of AdoMet from the enzyme. This Legionella pneumophila (strain Paris) protein is S-adenosylmethionine synthase.